Consider the following 170-residue polypeptide: Photosystem I assembly protein Ycf3 (170 aa).

TPR repeat units follow at residues 35 to 69, 73 to 106, and 121 to 154; these read AFTYYRDGVMSAQSEGEYAEALQNYYEAMRPEIDP, SYILYNIGLIHMSNGEHTEALEYYFQALKRNPSL, and GEQAIRQGDPETAEAWSDRAAEYWKQAIALAPGN.

Belongs to the Ycf3 family.

The protein localises to the plastid. It localises to the chloroplast thylakoid membrane. In terms of biological role, essential for the assembly of the photosystem I (PSI) complex. May act as a chaperone-like factor to guide the assembly of the PSI subunits. The polypeptide is Photosystem I assembly protein Ycf3 (Cycas taitungensis (Prince sago)).